A 185-amino-acid chain; its full sequence is Photosystem I assembly protein Ycf4 (185 aa).

2 consecutive transmembrane segments (helical) span residues 20-40 and 57-77; these read GNFFWACILFLGSLGFLSVGA and ILFFPQGVVMSFYGIAGLFIS.

It belongs to the Ycf4 family.

The protein resides in the plastid. Its subcellular location is the chloroplast thylakoid membrane. Seems to be required for the assembly of the photosystem I complex. This is Photosystem I assembly protein Ycf4 from Agrostis stolonifera (Creeping bentgrass).